The chain runs to 342 residues: Lipopolysaccharide heptosyltransferase 1 (342 aa).

8 residues coordinate ADP-L-glycero-beta-D-manno-heptose: serine 188, serine 189, lysine 193, glutamate 225, aspartate 268, serine 269, glycine 270, and histidine 273.

The protein belongs to the glycosyltransferase 9 family.

Its subcellular location is the cell inner membrane. The catalysed reaction is an alpha-Kdo-(2-&gt;4)-alpha-Kdo-(2-&gt;6)-lipid A + ADP-L-glycero-beta-D-manno-heptose = an L-alpha-D-Hep-(1-&gt;5)-[alpha-Kdo-(2-&gt;4)]-alpha-Kdo-(2-&gt;6)-lipid A + ADP + H(+). It participates in bacterial outer membrane biogenesis; LPS core biosynthesis. Functionally, glycosyltransferase involved in the biosynthesis of the core oligosaccharide region of lipopolysaccharide (LPS). Catalyzes the addition of the first heptose unit to one 3-deoxy-D-manno-octulosonic acid (Kdo) residue of the Kdo2-lipid A module. This Campylobacter coli protein is Lipopolysaccharide heptosyltransferase 1.